We begin with the raw amino-acid sequence, 510 residues long: Beta-glucosidase 12 (510 aa).

Positions 1 to 24 are cleaved as a signal peptide; it reads MAAAGAMPGGLLLTFLLLAVVASG. A beta-D-glucoside is bound at residue Q53. A glycan (N-linked (GlcNAc...) asparagine) is linked at N122. Residues H157 and 202–203 each bind a beta-D-glucoside; that span reads NE. The Proton donor role is filled by E203. 2 disulfide bridges follow: C208/C243 and C222/C230. The N-linked (GlcNAc...) asparagine glycan is linked to N229. Y346 contributes to the a beta-D-glucoside binding site. 2 N-linked (GlcNAc...) asparagine glycosylation sites follow: N361 and N371. E417 contacts a beta-D-glucoside. Residue E417 is the Nucleophile of the active site. An N-linked (GlcNAc...) asparagine glycan is attached at N425. A beta-D-glucoside contacts are provided by residues W466, 473–474, and F482; that span reads EW.

Belongs to the glycosyl hydrolase 1 family.

Its subcellular location is the secreted. It catalyses the reaction Hydrolysis of terminal, non-reducing beta-D-glucosyl residues with release of beta-D-glucose.. Functionally, hydrolyzes p-nitrophenyl beta-D-glucoside, p-nitrophenyl beta-D-galactoside, p-nitrophenyl beta-D-xyloside, p-nitrophenyl beta-D-fucoside, p-nitrophenyl beta-L-arabinoside, cello-oligosaccharides and laminaribiose. This is Beta-glucosidase 12 from Oryza sativa subsp. japonica (Rice).